Here is a 267-residue protein sequence, read N- to C-terminus: Large ribosomal subunit protein uL4 (267 aa).

Belongs to the universal ribosomal protein uL4 family. Part of the 50S ribosomal subunit.

One of the primary rRNA binding proteins, this protein initially binds near the 5'-end of the 23S rRNA. It is important during the early stages of 50S assembly. It makes multiple contacts with different domains of the 23S rRNA in the assembled 50S subunit and ribosome. Its function is as follows. Forms part of the polypeptide exit tunnel. This is Large ribosomal subunit protein uL4 from Saccharolobus islandicus (strain L.S.2.15 / Lassen #1) (Sulfolobus islandicus).